The primary structure comprises 644 residues: 3D-(3,5/4)-trihydroxycyclohexane-1,2-dione hydrolase (644 aa).

Glu65 serves as a coordination point for thiamine diphosphate. Residues 442–522 (SLPGDLQRMW…INVLLFDNSG (81 aa)) are thiamine pyrophosphate binding. Mg(2+) is bound by residues Asp493 and Asn520.

This sequence belongs to the TPP enzyme family. It depends on Mg(2+) as a cofactor. Thiamine diphosphate serves as cofactor.

It catalyses the reaction 3D-3,5/4-trihydroxycyclohexane-1,2-dione + H2O = 5-deoxy-D-glucuronate + H(+). It participates in polyol metabolism; myo-inositol degradation into acetyl-CoA; acetyl-CoA from myo-inositol: step 3/7. Involved in the cleavage of the C1-C2 bond of 3D-(3,5/4)-trihydroxycyclohexane-1,2-dione (THcHDO) to yield 5-deoxy-glucuronate (5DG). The chain is 3D-(3,5/4)-trihydroxycyclohexane-1,2-dione hydrolase from Bacillus anthracis (strain A0248).